Reading from the N-terminus, the 397-residue chain is Tryptophan synthase beta chain (397 aa).

Residue Lys-91 is modified to N6-(pyridoxal phosphate)lysine.

This sequence belongs to the TrpB family. As to quaternary structure, tetramer of two alpha and two beta chains. The cofactor is pyridoxal 5'-phosphate.

It carries out the reaction (1S,2R)-1-C-(indol-3-yl)glycerol 3-phosphate + L-serine = D-glyceraldehyde 3-phosphate + L-tryptophan + H2O. It participates in amino-acid biosynthesis; L-tryptophan biosynthesis; L-tryptophan from chorismate: step 5/5. Its function is as follows. The beta subunit is responsible for the synthesis of L-tryptophan from indole and L-serine. This is Tryptophan synthase beta chain from Bacillus cereus (strain ATCC 14579 / DSM 31 / CCUG 7414 / JCM 2152 / NBRC 15305 / NCIMB 9373 / NCTC 2599 / NRRL B-3711).